A 304-amino-acid chain; its full sequence is Small ribosomal subunit biogenesis GTPase RsgA (304 aa).

One can recognise a CP-type G domain in the interval 78 to 237 (VSFLTRPPVA…VADTPGFNRP (160 aa)). GTP contacts are provided by residues 127 to 130 (TKTD) and 179 to 187 (GPSGVGKSS). C262, C267, H269, and C275 together coordinate Zn(2+).

Belongs to the TRAFAC class YlqF/YawG GTPase family. RsgA subfamily. Monomer. Associates with 30S ribosomal subunit, binds 16S rRNA. Zn(2+) is required as a cofactor.

The protein localises to the cytoplasm. Functionally, one of several proteins that assist in the late maturation steps of the functional core of the 30S ribosomal subunit. Helps release RbfA from mature subunits. May play a role in the assembly of ribosomal proteins into the subunit. Circularly permuted GTPase that catalyzes slow GTP hydrolysis, GTPase activity is stimulated by the 30S ribosomal subunit. The protein is Small ribosomal subunit biogenesis GTPase RsgA of Synechococcus sp. (strain CC9311).